Consider the following 63-residue polypeptide: Kappa-theraphotoxin-Gr3a (63 aa).

The N-terminal stretch at 1–21 (MKTSVFVLVLGLVLLFAVSFA) is a signal peptide. The propeptide occupies 22–29 (TEMEESAR). 3 disulfide bridges follow: Cys31–Cys45, Cys38–Cys50, and Cys44–Cys57.

Belongs to the neurotoxin 10 (Hwtx-1) family. 63 (VsTx1) subfamily. As to expression, expressed by the venom gland.

The protein localises to the secreted. Its function is as follows. Inhibits sodium channels Nav1.7/SCN9A and potassium channels Kv11.1/KCNH2. Also binds the voltage-sensor domain of the potassium channel KvAP (from the archaeon Aeropyrum pernix) with very slow apparent binding kinetics and affects channel gating. Reaches its target by dynamically partitioning into anionic or zwitterionic headgroup lipid membranes. May bind to the open state of KvAP. The sequence is that of Kappa-theraphotoxin-Gr3a from Grammostola rosea (Chilean rose tarantula).